A 419-amino-acid chain; its full sequence is Tyrosine--tRNA ligase 1 (419 aa).

Position 35 (tyrosine 35) interacts with L-tyrosine. The 'HIGH' region signature appears at proline 40–histidine 49. Tyrosine 172 and glutamine 176 together coordinate L-tyrosine. The 'KMSKS' region signature appears at lysine 232 to threonine 236. Residue lysine 235 coordinates ATP. The region spanning glutamine 353–alanine 418 is the S4 RNA-binding domain.

This sequence belongs to the class-I aminoacyl-tRNA synthetase family. TyrS type 1 subfamily. In terms of assembly, homodimer.

The protein localises to the cytoplasm. It catalyses the reaction tRNA(Tyr) + L-tyrosine + ATP = L-tyrosyl-tRNA(Tyr) + AMP + diphosphate + H(+). In terms of biological role, catalyzes the attachment of tyrosine to tRNA(Tyr) in a two-step reaction: tyrosine is first activated by ATP to form Tyr-AMP and then transferred to the acceptor end of tRNA(Tyr). The chain is Tyrosine--tRNA ligase 1 from Vibrio parahaemolyticus serotype O3:K6 (strain RIMD 2210633).